Consider the following 81-residue polypeptide: Sulfur carrier protein TusA (81 aa).

The Cysteine persulfide intermediate role is filled by cysteine 19.

It belongs to the sulfur carrier protein TusA family. Interacts with IscS.

The protein resides in the cytoplasm. The protein operates within tRNA modification. Sulfur carrier protein involved in sulfur trafficking in the cell. Part of a sulfur-relay system required for 2-thiolation during synthesis of 2-thiouridine of the modified wobble base 5-methylaminomethyl-2-thiouridine (mnm(5)s(2)U) in tRNA. Interacts with IscS and stimulates its cysteine desulfurase activity. Accepts an activated sulfur from IscS, which is then transferred to TusD, and thus determines the direction of sulfur flow from IscS to 2-thiouridine formation. Also appears to be involved in sulfur transfer for the biosynthesis of molybdopterin. This Cronobacter sakazakii (strain ATCC BAA-894) (Enterobacter sakazakii) protein is Sulfur carrier protein TusA.